The primary structure comprises 370 residues: Nociceptin receptor (370 aa).

Residues 1–48 (MESLFPAPFWEVLYGSPLQGNLSLLSPNHSLLPPHLLLNASHGAFLPL) lie on the Extracellular side of the membrane. 3 N-linked (GlcNAc...) asparagine glycosylation sites follow: asparagine 21, asparagine 28, and asparagine 39. Residues 49-74 (GLKVTIVGLYLAVCVGGLLGNCLVMY) traverse the membrane as a helical segment. Residues 75-87 (VILRHTKMKTATN) are Cytoplasmic-facing. A helical membrane pass occupies residues 88–109 (IYIFNLALADTAVLLTLPFQGT). The Extracellular portion of the chain corresponds to 110-124 (DVLLGFWPFGNALCK). Cysteine 123 and cysteine 200 are joined by a disulfide. Residues 125–146 (AVIAIDYYNMFTSAFTLTAMSV) traverse the membrane as a helical segment. Over 147–165 (DRYVAICHPIRALDVRTSS) the chain is Cytoplasmic. A helical transmembrane segment spans residues 166–188 (KAQAVNVAIWALASIVGVPVAIM). At 189–211 (GSAQVEDEEIECLVEIPAPQDYW) the chain is on the extracellular side. A helical membrane pass occupies residues 212-236 (GPVFAVCIFLFSFVIPVLIISVCYS). Residues 237–264 (LMVRRLRGVRLLSGSREKDRNLRRITRL) lie on the Cytoplasmic side of the membrane. Residues 265–285 (VLVVVAVFVGCWTPVQVFVLV) form a helical membrane-spanning segment. Residues 286–300 (QGLGVQPGSETAVAV) lie on the Extracellular side of the membrane. A helical transmembrane segment spans residues 301–322 (LRFCTALGYVNSCLNPILYAFL). Residues 323–370 (DENFKACFRKFCCAPTRRREMQVSDRVRSIAKDVALACKTSETVPRPA) are Cytoplasmic-facing. A lipid anchor (S-palmitoyl cysteine) is attached at cysteine 334.

Belongs to the G-protein coupled receptor 1 family. In terms of processing, phosphorylation at Ser-363 requires GRK3. In terms of tissue distribution, detected in brain cortex, stomach, ileum, jejunum and colon.

The protein localises to the cell membrane. It is found in the cytoplasmic vesicle. Functionally, G-protein coupled opioid receptor that functions as a receptor for the endogenous neuropeptide nociceptin. Ligand binding causes a conformation change that triggers signaling via guanine nucleotide-binding proteins (G proteins) and modulates the activity of down-stream effectors. Signaling via G proteins mediates inhibition of adenylate cyclase activity and calcium channel activity. Arrestins modulate signaling via G proteins and mediate the activation of alternative signaling pathways that lead to the activation of MAP kinases. Plays a role in modulating nociception and the perception of pain. Plays a role in the regulation of locomotor activity by the neuropeptide nociceptin. This chain is Nociceptin receptor (OPRL1), found in Sus scrofa (Pig).